The primary structure comprises 218 residues: Dual specificity protein phosphatase TpbA (218 aa).

The first 28 residues, 1-28 (MHRSPLAWLRLLLAAVLGAFLLGGPLHA), serve as a signal peptide directing secretion. Residues 44-188 (DPSINLYRMS…YVRGADVDGL (145 aa)) form the Tyrosine-protein phosphatase domain. The Proton donor/acceptor role is filled by D105. C132 functions as the Phosphocysteine intermediate in the catalytic mechanism.

It belongs to the protein-tyrosine phosphatase family.

The protein localises to the periplasm. It carries out the reaction O-phospho-L-tyrosyl-[protein] + H2O = L-tyrosyl-[protein] + phosphate. The catalysed reaction is O-phospho-L-threonyl-[protein] + H2O = L-threonyl-[protein] + phosphate. It catalyses the reaction O-phospho-L-seryl-[protein] + H2O = L-seryl-[protein] + phosphate. Its function is as follows. Phosphatase that regulates diverse phenotypes in P.aeruginosa via regulation of the concentration of cellular c-di-GMP. Acts by dephosphorylating the membrane-anchored diguanylate cyclase TpbB at tyrosine and serine/threonine sites, leading to inactivation of TpbB and reduced c-di-GMP production. In vitro shows phosphatase activity toward p-nitrophenyl phosphate (pNPP) and tyrosine phosphopeptides. Can efficiently dephosphorylate two phosphorylated peptides derived from the periplasmic domain of TpbB, with a strong preference for Tyr-48 over Tyr-62. The protein is Dual specificity protein phosphatase TpbA of Pseudomonas aeruginosa (strain ATCC 15692 / DSM 22644 / CIP 104116 / JCM 14847 / LMG 12228 / 1C / PRS 101 / PAO1).